A 559-amino-acid polypeptide reads, in one-letter code: Dihydroxy-acid dehydratase (559 aa).

Residue Cys-52 coordinates [2Fe-2S] cluster. Asp-84 contributes to the Mg(2+) binding site. Cys-125 lines the [2Fe-2S] cluster pocket. Residues Asp-126 and Lys-127 each contribute to the Mg(2+) site. An N6-carboxylysine modification is found at Lys-127. Cys-197 contributes to the [2Fe-2S] cluster binding site. Glu-447 lines the Mg(2+) pocket. Residue Ser-473 is the Proton acceptor of the active site.

It belongs to the IlvD/Edd family. Homodimer. [2Fe-2S] cluster serves as cofactor. Mg(2+) is required as a cofactor.

The enzyme catalyses (2R)-2,3-dihydroxy-3-methylbutanoate = 3-methyl-2-oxobutanoate + H2O. It catalyses the reaction (2R,3R)-2,3-dihydroxy-3-methylpentanoate = (S)-3-methyl-2-oxopentanoate + H2O. Its pathway is amino-acid biosynthesis; L-isoleucine biosynthesis; L-isoleucine from 2-oxobutanoate: step 3/4. It functions in the pathway amino-acid biosynthesis; L-valine biosynthesis; L-valine from pyruvate: step 3/4. Its function is as follows. Functions in the biosynthesis of branched-chain amino acids. Catalyzes the dehydration of (2R,3R)-2,3-dihydroxy-3-methylpentanoate (2,3-dihydroxy-3-methylvalerate) into 2-oxo-3-methylpentanoate (2-oxo-3-methylvalerate) and of (2R)-2,3-dihydroxy-3-methylbutanoate (2,3-dihydroxyisovalerate) into 2-oxo-3-methylbutanoate (2-oxoisovalerate), the penultimate precursor to L-isoleucine and L-valine, respectively. The sequence is that of Dihydroxy-acid dehydratase from Roseiflexus sp. (strain RS-1).